A 314-amino-acid polypeptide reads, in one-letter code: tRNA dimethylallyltransferase 1 (314 aa).

An ATP-binding site is contributed by 17 to 24 (GPTAAGKT). 19–24 (TAAGKT) provides a ligand contact to substrate. The interval 42 to 45 (DSRQ) is interaction with substrate tRNA.

It belongs to the IPP transferase family. Monomer. Mg(2+) serves as cofactor.

It catalyses the reaction adenosine(37) in tRNA + dimethylallyl diphosphate = N(6)-dimethylallyladenosine(37) in tRNA + diphosphate. Functionally, catalyzes the transfer of a dimethylallyl group onto the adenine at position 37 in tRNAs that read codons beginning with uridine, leading to the formation of N6-(dimethylallyl)adenosine (i(6)A). In Syntrophotalea carbinolica (strain DSM 2380 / NBRC 103641 / GraBd1) (Pelobacter carbinolicus), this protein is tRNA dimethylallyltransferase 1.